The chain runs to 170 residues: Archaemetzincin (170 aa).

Position 110 (His-110) interacts with Zn(2+). Catalysis depends on Glu-111, which acts as the Proton acceptor. Zn(2+) is bound by residues His-114, His-120, Cys-121, Cys-125, Cys-144, and Cys-147.

It belongs to the peptidase M54 family. In terms of assembly, monomer. Zn(2+) serves as cofactor.

Functionally, probable zinc metalloprotease whose natural substrate is unknown. This is Archaemetzincin from Nanoarchaeum equitans (strain Kin4-M).